Here is a 137-residue protein sequence, read N- to C-terminus: Putative pre-16S rRNA nuclease (137 aa).

Belongs to the YqgF nuclease family.

The protein resides in the cytoplasm. In terms of biological role, could be a nuclease involved in processing of the 5'-end of pre-16S rRNA. The polypeptide is Putative pre-16S rRNA nuclease (Clostridium botulinum (strain 657 / Type Ba4)).